Here is an 887-residue protein sequence, read N- to C-terminus: DNA gyrase subunit A (887 aa).

The Topo IIA-type catalytic domain maps to 35 to 501 (LPDVRDGLKP…GFEDLEDEDL (467 aa)). The active-site O-(5'-phospho-DNA)-tyrosine intermediate is Tyr-123. The GyrA-box motif lies at 528 to 534 (QNRGGRG). The disordered stretch occupies residues 811 to 865 (KEDAEDETNEDEQSTSTVSEDGTEQQREAVVNDETPGNAIHTEVIDSEENDEDGR). Acidic residues predominate over residues 813–823 (DAEDETNEDEQ).

The protein belongs to the type II topoisomerase GyrA/ParC subunit family. As to quaternary structure, heterotetramer, composed of two GyrA and two GyrB chains. In the heterotetramer, GyrA contains the active site tyrosine that forms a transient covalent intermediate with DNA, while GyrB binds cofactors and catalyzes ATP hydrolysis.

The protein resides in the cytoplasm. It catalyses the reaction ATP-dependent breakage, passage and rejoining of double-stranded DNA.. A type II topoisomerase that negatively supercoils closed circular double-stranded (ds) DNA in an ATP-dependent manner to modulate DNA topology and maintain chromosomes in an underwound state. Negative supercoiling favors strand separation, and DNA replication, transcription, recombination and repair, all of which involve strand separation. Also able to catalyze the interconversion of other topological isomers of dsDNA rings, including catenanes and knotted rings. Type II topoisomerases break and join 2 DNA strands simultaneously in an ATP-dependent manner. The sequence is that of DNA gyrase subunit A from Staphylococcus aureus (strain MSSA476).